The primary structure comprises 363 residues: Fructose-bisphosphate aldolase (363 aa).

2 residues coordinate substrate: Arg56 and Lys147. Catalysis depends on Glu188, which acts as the Proton acceptor. The Schiff-base intermediate with dihydroxyacetone-P role is filled by Lys230.

This sequence belongs to the class I fructose-bisphosphate aldolase family.

The enzyme catalyses beta-D-fructose 1,6-bisphosphate = D-glyceraldehyde 3-phosphate + dihydroxyacetone phosphate. Its pathway is carbohydrate degradation; glycolysis; D-glyceraldehyde 3-phosphate and glycerone phosphate from D-glucose: step 4/4. In Schistosoma mansoni (Blood fluke), this protein is Fructose-bisphosphate aldolase.